A 73-amino-acid chain; its full sequence is Small ribosomal subunit protein bS18 (73 aa).

Belongs to the bacterial ribosomal protein bS18 family. As to quaternary structure, part of the 30S ribosomal subunit. Forms a tight heterodimer with protein bS6.

Binds as a heterodimer with protein bS6 to the central domain of the 16S rRNA, where it helps stabilize the platform of the 30S subunit. The protein is Small ribosomal subunit protein bS18 of Prochlorococcus marinus subsp. pastoris (strain CCMP1986 / NIES-2087 / MED4).